The chain runs to 300 residues: Type II methyltransferase M.Cfr9I (300 aa).

The tract at residues 109 to 129 is disordered; the sequence is RGYRAPDKKNPARAMAVRPDT.

It belongs to the N(4)/N(6)-methyltransferase family. N(4) subfamily.

The enzyme catalyses a 2'-deoxycytidine in DNA + S-adenosyl-L-methionine = an N(4)-methyl-2'-deoxycytidine in DNA + S-adenosyl-L-homocysteine + H(+). Functionally, a beta subtype methylase, recognizes the double-stranded sequence 5'-CCCGGG-3', methylates C-2 on both strands, and protects the DNA from cleavage by the Cfr9I endonuclease. In Citrobacter freundii, this protein is Type II methyltransferase M.Cfr9I.